We begin with the raw amino-acid sequence, 319 residues long: ATP-dependent 6-phosphofructokinase (319 aa).

Position 11 (Gly11) interacts with ATP. Residue Arg21–Arg25 coordinates ADP. Residues Arg72–Cys73 and Gly102–Ser105 contribute to the ATP site. A Mg(2+)-binding site is contributed by Asp103. Substrate is bound at residue Thr125 to Asp127. The Proton acceptor role is filled by Asp127. An ADP-binding site is contributed by Arg154. Residues Arg162 and Met169–Arg171 each bind substrate. Residues Gly185–Glu187, Arg211, and Lys213–His215 each bind ADP. Substrate-binding positions include Glu222, Arg243, and His249 to Arg252.

Belongs to the phosphofructokinase type A (PFKA) family. ATP-dependent PFK group I subfamily. Prokaryotic clade 'B1' sub-subfamily. As to quaternary structure, homotetramer. It depends on Mg(2+) as a cofactor.

It is found in the cytoplasm. The catalysed reaction is beta-D-fructose 6-phosphate + ATP = beta-D-fructose 1,6-bisphosphate + ADP + H(+). It functions in the pathway carbohydrate degradation; glycolysis; D-glyceraldehyde 3-phosphate and glycerone phosphate from D-glucose: step 3/4. Its activity is regulated as follows. Allosterically activated by ADP and other diphosphonucleosides, and allosterically inhibited by phosphoenolpyruvate. Its function is as follows. Catalyzes the phosphorylation of D-fructose 6-phosphate to fructose 1,6-bisphosphate by ATP, the first committing step of glycolysis. This chain is ATP-dependent 6-phosphofructokinase, found in Bacillus cytotoxicus (strain DSM 22905 / CIP 110041 / 391-98 / NVH 391-98).